Here is a 106-residue protein sequence, read N- to C-terminus: ATP-dependent Clp protease adapter protein ClpS (106 aa).

This sequence belongs to the ClpS family. In terms of assembly, binds to the N-terminal domain of the chaperone ClpA.

Involved in the modulation of the specificity of the ClpAP-mediated ATP-dependent protein degradation. The chain is ATP-dependent Clp protease adapter protein ClpS from Escherichia coli O127:H6 (strain E2348/69 / EPEC).